A 57-amino-acid chain; its full sequence is Large ribosomal subunit protein uL30 (57 aa).

The protein belongs to the universal ribosomal protein uL30 family. Part of the 50S ribosomal subunit.

This Clostridium perfringens (strain ATCC 13124 / DSM 756 / JCM 1290 / NCIMB 6125 / NCTC 8237 / Type A) protein is Large ribosomal subunit protein uL30.